The sequence spans 302 residues: Sodium/potassium-transporting ATPase subunit beta-233 (302 aa).

At 1–30 (MSGNKDSDGGWKTFIWNSEKKELLGRTGCS) the chain is on the cytoplasmic side. Residues 31 to 51 (WFKILLFYVIFYGCLAAVFVG) form a helical; Signal-anchor for type II membrane protein membrane-spanning segment. Topologically, residues 52 to 302 (TIQALLLTLS…FDIKITVNDS (251 aa)) are extracellular. 2 disulfides stabilise this stretch: C125–C148 and C158–C174. Residues N193 and N263 are each glycosylated (N-linked (GlcNAc...) asparagine). A disulfide bridge connects residues C213 and C274.

It belongs to the X(+)/potassium ATPases subunit beta family. As to quaternary structure, the sodium/potassium-transporting ATPase is composed of a catalytic alpha subunit, an auxiliary non-catalytic beta subunit and an additional regulatory subunit. Post-translationally, glycosylated. As to expression, expressed mainly in epithelial tissues.

The protein resides in the cell membrane. This is the non-catalytic component of the active enzyme, which catalyzes the hydrolysis of ATP coupled with the exchange of Na(+) and K(+) ions across the plasma membrane. The beta subunit regulates, through assembly of alpha/beta heterodimers, the number of sodium pumps transported to the plasma membrane. The chain is Sodium/potassium-transporting ATPase subunit beta-233 from Anguilla anguilla (European freshwater eel).